The following is a 164-amino-acid chain: Protein SprT (164 aa).

Positions Gln-14–Val-156 constitute a SprT-like domain. His-69 provides a ligand contact to Zn(2+). Glu-70 is an active-site residue. Residue His-73 participates in Zn(2+) binding.

It belongs to the SprT family. Zn(2+) is required as a cofactor.

Its subcellular location is the cytoplasm. In Pseudomonas putida (strain W619), this protein is Protein SprT.